The primary structure comprises 77 residues: Conotoxin ArMKLT2-0251 (77 aa).

Positions methionine 1–alanine 22 are cleaved as a signal peptide. Residues aspartate 23–methionine 46 constitute a propeptide that is removed on maturation. The residue at position 49 (glutamine 49) is a Pyrrolidone carboxylic acid. Intrachain disulfides connect cysteine 50-cysteine 65, cysteine 57-cysteine 68, and cysteine 64-cysteine 73.

This sequence belongs to the conotoxin O1 superfamily. Expressed by the venom duct.

The protein resides in the secreted. This Conus arenatus (Sand-dusted cone) protein is Conotoxin ArMKLT2-0251.